The primary structure comprises 273 residues: NAD-dependent protein deacylase (273 aa).

Residues 20-272 (RERLRQRIFF…PEFVEKLLKG (253 aa)) form the Deacetylase sirtuin-type domain. Position 48–67 (48–67 (GAGISAESGIRTFRAADGLW)) interacts with NAD(+). The substrate site is built by Tyr92 and Arg95. Position 129–132 (129–132 (QNID)) interacts with NAD(+). The active-site Proton acceptor is His147. The Zn(2+) site is built by Cys155 and Cys174. Residues 214–216 (GTS), 240–242 (NLE), and Ala258 contribute to the NAD(+) site.

It belongs to the sirtuin family. Class III subfamily. Zn(2+) serves as cofactor.

Its subcellular location is the cytoplasm. It carries out the reaction N(6)-acetyl-L-lysyl-[protein] + NAD(+) + H2O = 2''-O-acetyl-ADP-D-ribose + nicotinamide + L-lysyl-[protein]. It catalyses the reaction N(6)-succinyl-L-lysyl-[protein] + NAD(+) + H2O = 2''-O-succinyl-ADP-D-ribose + nicotinamide + L-lysyl-[protein]. The catalysed reaction is N(6)-(2-hydroxyisobutanoyl)-L-lysyl-[protein] + NAD(+) + H2O = 2''-O-(2-hydroxyisobutanoyl)-ADP-D-ribose + nicotinamide + L-lysyl-[protein]. NAD-dependent lysine deacetylase that specifically removes acetyl groups on target proteins. Also acts as a protein-lysine deacylase by mediating protein desuccinylation and de-2-hydroxyisobutyrylation. Modulates the activities of several proteins which are inactive in their acylated form. This is NAD-dependent protein deacylase from Escherichia coli O6:H1 (strain CFT073 / ATCC 700928 / UPEC).